The primary structure comprises 376 residues: WD repeat-containing protein 86 (376 aa).

WD repeat units follow at residues 13–52, 55–94, 95–132, 135–188, 191–232, 234–272, 274–310, and 313–350; these read DHRG…CCAL, GHES…QVYR, GHTS…MSRE, GHRN…CHQT, GHTG…RVFR, HRGS…RTFT, HRRN…LRRV, and GHTF…GAPR.

The chain is WD repeat-containing protein 86 (WDR86) from Homo sapiens (Human).